We begin with the raw amino-acid sequence, 668 residues long: tRNA 5-methylaminomethyl-2-thiouridine biosynthesis bifunctional protein MnmC (668 aa).

The interval 1-245 (MKHYSIQPAN…KREMLCGVME (245 aa)) is tRNA (mnm(5)s(2)U34)-methyltransferase. Residues 270–668 (IGGGIASALL…LLKGKAVKAG (399 aa)) are FAD-dependent cmnm(5)s(2)U34 oxidoreductase.

This sequence in the N-terminal section; belongs to the methyltransferase superfamily. tRNA (mnm(5)s(2)U34)-methyltransferase family. The protein in the C-terminal section; belongs to the DAO family. FAD is required as a cofactor.

Its subcellular location is the cytoplasm. The enzyme catalyses 5-aminomethyl-2-thiouridine(34) in tRNA + S-adenosyl-L-methionine = 5-methylaminomethyl-2-thiouridine(34) in tRNA + S-adenosyl-L-homocysteine + H(+). In terms of biological role, catalyzes the last two steps in the biosynthesis of 5-methylaminomethyl-2-thiouridine (mnm(5)s(2)U) at the wobble position (U34) in tRNA. Catalyzes the FAD-dependent demodification of cmnm(5)s(2)U34 to nm(5)s(2)U34, followed by the transfer of a methyl group from S-adenosyl-L-methionine to nm(5)s(2)U34, to form mnm(5)s(2)U34. This is tRNA 5-methylaminomethyl-2-thiouridine biosynthesis bifunctional protein MnmC from Escherichia coli O157:H7.